The following is a 213-amino-acid chain: N-(5'-phosphoribosyl)anthranilate isomerase (213 aa).

Belongs to the TrpF family.

It carries out the reaction N-(5-phospho-beta-D-ribosyl)anthranilate = 1-(2-carboxyphenylamino)-1-deoxy-D-ribulose 5-phosphate. It participates in amino-acid biosynthesis; L-tryptophan biosynthesis; L-tryptophan from chorismate: step 3/5. The sequence is that of N-(5'-phosphoribosyl)anthranilate isomerase from Methylibium petroleiphilum (strain ATCC BAA-1232 / LMG 22953 / PM1).